Consider the following 138-residue polypeptide: Cysteine desulfuration protein SufE (138 aa).

The Cysteine persulfide intermediate role is filled by Cys51.

This sequence belongs to the SufE family. In terms of assembly, homodimer. Interacts with SufS.

The protein localises to the cytoplasm. The protein operates within cofactor biosynthesis; iron-sulfur cluster biosynthesis. Participates in cysteine desulfuration mediated by SufS. Cysteine desulfuration mobilizes sulfur from L-cysteine to yield L-alanine and constitutes an essential step in sulfur metabolism for biosynthesis of a variety of sulfur-containing biomolecules. Functions as a sulfur acceptor for SufS, by mediating the direct transfer of the sulfur atom from the S-sulfanylcysteine of SufS, an intermediate product of cysteine desulfuration process. The sequence is that of Cysteine desulfuration protein SufE from Shigella sonnei (strain Ss046).